We begin with the raw amino-acid sequence, 260 residues long: Indole-3-glycerol phosphate synthase (260 aa).

Belongs to the TrpC family.

The catalysed reaction is 1-(2-carboxyphenylamino)-1-deoxy-D-ribulose 5-phosphate + H(+) = (1S,2R)-1-C-(indol-3-yl)glycerol 3-phosphate + CO2 + H2O. It participates in amino-acid biosynthesis; L-tryptophan biosynthesis; L-tryptophan from chorismate: step 4/5. The protein is Indole-3-glycerol phosphate synthase of Nocardioides sp. (strain ATCC BAA-499 / JS614).